Here is a 519-residue protein sequence, read N- to C-terminus: uncharacterized protein (519 aa).

4 helical membrane-spanning segments follow: residues 141-161 (GSSL…ANVF), 202-222 (LGET…WALA), 385-405 (FVVR…PFVG), and 433-453 (TVVP…AELV).

Its subcellular location is the cell membrane. This is an uncharacterized protein from Sinorhizobium fredii (strain NBRC 101917 / NGR234).